A 377-amino-acid chain; its full sequence is 2-iminoacetate synthase (377 aa).

One can recognise a Radical SAM core domain in the interval Asn-71 to Arg-301. Residues Cys-85, Cys-89, and Cys-92 each coordinate [4Fe-4S] cluster.

The protein belongs to the radical SAM superfamily. ThiH family. As to quaternary structure, forms a heterodimer with ThiG. [4Fe-4S] cluster serves as cofactor.

The enzyme catalyses L-tyrosine + S-adenosyl-L-methionine + NADPH = 2-iminoacetate + 4-methylphenol + 5'-deoxyadenosine + L-methionine + NADP(+). It functions in the pathway cofactor biosynthesis; thiamine diphosphate biosynthesis. Its function is as follows. Catalyzes the radical-mediated cleavage of tyrosine to 2-iminoacetate and 4-cresol. This is 2-iminoacetate synthase (thiH) from Escherichia coli (strain K12).